We begin with the raw amino-acid sequence, 318 residues long: Aspartate carbamoyltransferase catalytic subunit (318 aa).

2 residues coordinate carbamoyl phosphate: R67 and T68. K95 lines the L-aspartate pocket. 3 residues coordinate carbamoyl phosphate: R117, H145, and Q148. L-aspartate contacts are provided by R178 and R236. Carbamoyl phosphate-binding residues include G277 and P278.

The protein belongs to the aspartate/ornithine carbamoyltransferase superfamily. ATCase family. Heterododecamer (2C3:3R2) of six catalytic PyrB chains organized as two trimers (C3), and six regulatory PyrI chains organized as three dimers (R2).

The enzyme catalyses carbamoyl phosphate + L-aspartate = N-carbamoyl-L-aspartate + phosphate + H(+). Its pathway is pyrimidine metabolism; UMP biosynthesis via de novo pathway; (S)-dihydroorotate from bicarbonate: step 2/3. Functionally, catalyzes the condensation of carbamoyl phosphate and aspartate to form carbamoyl aspartate and inorganic phosphate, the committed step in the de novo pyrimidine nucleotide biosynthesis pathway. The sequence is that of Aspartate carbamoyltransferase catalytic subunit from Roseiflexus castenholzii (strain DSM 13941 / HLO8).